The following is a 180-amino-acid chain: Trafficking protein particle complex subunit 3 (180 aa).

C68 carries the S-palmitoyl cysteine lipid modification.

It belongs to the TRAPP small subunits family. BET3 subfamily. Homodimer. Component of the multisubunit transport protein particle (TRAPP) complex, which includes at least TRAPPC2, TRAPPC2L, TRAPPC3, TRAPPC3L, TRAPPC4, TRAPPC5, TRAPPC8, TRAPPC9, TRAPPC10, TRAPPC11 and TRAPPC12. Heterodimer with TRAPPC6A. The heterodimer TRAPPC3-TRAPPC6A interacts with TRAPPC2L. Heterodimer with TRAPPC6b. The heterodimer TRAPPC6B-TRAPPC3 interacts with TRAPPC1 likely providing a core for TRAPP complex formation.

The protein resides in the golgi apparatus. The protein localises to the cis-Golgi network. Its subcellular location is the endoplasmic reticulum. Functionally, may play a role in vesicular transport from endoplasmic reticulum to Golgi. This chain is Trafficking protein particle complex subunit 3, found in Homo sapiens (Human).